A 117-amino-acid polypeptide reads, in one-letter code: UPF0102 protein Rsph17029_0461 (117 aa).

Belongs to the UPF0102 family.

In Cereibacter sphaeroides (strain ATCC 17029 / ATH 2.4.9) (Rhodobacter sphaeroides), this protein is UPF0102 protein Rsph17029_0461.